The chain runs to 641 residues: 1-deoxy-D-xylulose-5-phosphate synthase (641 aa).

Thiamine diphosphate is bound by residues His-71 and Ser-112–Ala-114. Asp-144 contacts Mg(2+). Residues Gly-145–Ala-146, Asn-173, Tyr-284, and Glu-365 contribute to the thiamine diphosphate site. Asn-173 is a binding site for Mg(2+).

It belongs to the transketolase family. DXPS subfamily. As to quaternary structure, homodimer. Requires Mg(2+) as cofactor. Thiamine diphosphate is required as a cofactor.

The enzyme catalyses D-glyceraldehyde 3-phosphate + pyruvate + H(+) = 1-deoxy-D-xylulose 5-phosphate + CO2. The protein operates within metabolic intermediate biosynthesis; 1-deoxy-D-xylulose 5-phosphate biosynthesis; 1-deoxy-D-xylulose 5-phosphate from D-glyceraldehyde 3-phosphate and pyruvate: step 1/1. Its function is as follows. Catalyzes the acyloin condensation reaction between C atoms 2 and 3 of pyruvate and glyceraldehyde 3-phosphate to yield 1-deoxy-D-xylulose-5-phosphate (DXP). The sequence is that of 1-deoxy-D-xylulose-5-phosphate synthase from Mycobacterium avium (strain 104).